We begin with the raw amino-acid sequence, 686 residues long: Delta-like protein 4 (686 aa).

The N-terminal stretch at 1-27 (MTPGSRSACRWALLLLAVLWPQQRAAG) is a signal peptide. Residues 28-530 (SGIFQLRLQE…PVGLPPSFPW (503 aa)) lie on the Extracellular side of the membrane. Disulfide bonds link Cys51–Cys55 and Cys62–Cys75. N-linked (GlcNAc...) asparagine glycans are attached at residues Asn79, Asn109, and Asn162. The 45-residue stretch at 174–218 (VVCSDNYYGDSCSRLCKKRDDHFGHYECQPDGSLSCLPGWTGKYC) folds into the DSL domain. Cys176 and Cys185 are joined by a disulfide. Interaction with Notch1 stretches follow at residues 186 to 188 (SRL) and 192 to 196 (RDDHF). Cystine bridges form between Cys189–Cys201, Cys209–Cys218, Cys223–Cys234, Cys227–Cys240, Cys242–Cys251, Cys254–Cys265, Cys260–Cys271, Cys273–Cys282, Cys289–Cys301, Cys295–Cys311, Cys313–Cys322, Cys329–Cys340, Cys334–Cys349, Cys351–Cys360, Cys367–Cys378, Cys372–Cys389, Cys391–Cys400, Cys407–Cys418, Cys412–Cys427, Cys429–Cys438, Cys445–Cys456, Cys450–Cys465, Cys467–Cys476, Cys485–Cys496, Cys490–Cys507, and Cys509–Cys518. EGF-like domains lie at 219–252 (DQPI…PLCN), 256–283 (PHNG…LFCD), 285–323 (DLNY…EHCE), 325–361 (ELSK…QHCE), 363–401 (STLT…SNCE), 403–439 (KVDR…THCE), 441–477 (HISD…RRCE), and 481–519 (TNDA…SRCE). The chain crosses the membrane as a helical span at residues 531-551 (VAVSLGVGLVVLLVLLVMVAV). Residues 552-686 (AVRQLRLRRP…RNECVIATEV (135 aa)) lie on the Cytoplasmic side of the membrane.

In terms of assembly, interacts with NOTCH4. Interacts (via N-terminal DSL and MNNL domains) with NOTCH1 (via EGF-like domains).

It localises to the cell membrane. Functionally, involved in the Notch signaling pathway as Notch ligand. Activates NOTCH1 and NOTCH4. Involved in angiogenesis; negatively regulates endothelial cell proliferation and migration and angiogenic sprouting. Essential for retinal progenitor proliferation. Required for suppressing rod fates in late retinal progenitors as well as for proper generation of other retinal cell types. During spinal cord neurogenesis, inhibits V2a interneuron fate. The sequence is that of Delta-like protein 4 from Rattus norvegicus (Rat).